A 143-amino-acid polypeptide reads, in one-letter code: MSIIKEFKEFAVKGNVMDLAVGVIIGGAFSKIVDSVVKDLIMPVIGVLTGGLDFSNKFVLLGTIPPSFKGNPDSFKDLQAAGVAAFGYGSFITVAINFVILAFIIFLMVKFINKLRKPEEAAPAATPEDVVLLREIRDSLKQR.

2 consecutive transmembrane segments (helical) span residues 10–30 (FAVK…GAFS) and 89–109 (GSFI…FLMV).

It belongs to the MscL family. In terms of assembly, homopentamer.

Its subcellular location is the cell inner membrane. Its function is as follows. Channel that opens in response to stretch forces in the membrane lipid bilayer. May participate in the regulation of osmotic pressure changes within the cell. The sequence is that of Large-conductance mechanosensitive channel from Burkholderia cenocepacia (strain HI2424).